A 438-amino-acid chain; its full sequence is Serine hydroxymethyltransferase (438 aa).

Residues Leu-133 and 137 to 139 contribute to the (6S)-5,6,7,8-tetrahydrofolate site; that span reads GHL. Lys-242 carries the N6-(pyridoxal phosphate)lysine modification.

It belongs to the SHMT family. Homodimer. Pyridoxal 5'-phosphate is required as a cofactor.

Its subcellular location is the cytoplasm. It catalyses the reaction (6R)-5,10-methylene-5,6,7,8-tetrahydrofolate + glycine + H2O = (6S)-5,6,7,8-tetrahydrofolate + L-serine. It participates in one-carbon metabolism; tetrahydrofolate interconversion. The protein operates within amino-acid biosynthesis; glycine biosynthesis; glycine from L-serine: step 1/1. Its function is as follows. Catalyzes the reversible interconversion of serine and glycine with tetrahydrofolate (THF) serving as the one-carbon carrier. This reaction serves as the major source of one-carbon groups required for the biosynthesis of purines, thymidylate, methionine, and other important biomolecules. Also exhibits THF-independent aldolase activity toward beta-hydroxyamino acids, producing glycine and aldehydes, via a retro-aldol mechanism. The sequence is that of Serine hydroxymethyltransferase from Brucella canis (strain ATCC 23365 / NCTC 10854 / RM-666).